The following is a 416-amino-acid chain: Keratin, type I cuticular Ha1 (416 aa).

The head stretch occupies residues 2–56 (PYNCCLPALSCRTSCSSRPCVPPSCHGCTLPGACNIPANVGNCNWFCEGSFNGNE). The IF rod domain occupies 56–367 (EKETMQFLND…GLLESEDCKL (312 aa)). Positions 57 to 91 (KETMQFLNDRLASYMEKVRQLERENAELECRIQER) are coil 1A. The segment at 92 to 102 (NQQQDPLVCPA) is linker 1. Positions 103-203 (YQAYFRTIEE…HEEEVNTLRC (101 aa)) are coil 1B. Positions 204–219 (QLGDRLNVEVDAAPTV) are linker 12. The segment at 220–363 (DLNRVLNETR…NTYRGLLESE (144 aa)) is coil 2. A tail region spans residues 364 to 416 (DCKLPCNPCATSNACGKPIGPCVSNPCVPCPPPAPCTPCVPRPRCGPCNSFVR).

The protein belongs to the intermediate filament family.

The chain is Keratin, type I cuticular Ha1 (Krt31) from Mus musculus (Mouse).